The following is a 334-amino-acid chain: 4-hydroxy-3-methylbut-2-enyl diphosphate reductase (334 aa).

Cysteine 19 is a binding site for [4Fe-4S] cluster. The (2E)-4-hydroxy-3-methylbut-2-enyl diphosphate site is built by histidine 48 and histidine 84. Histidine 48 and histidine 84 together coordinate dimethylallyl diphosphate. Positions 48 and 84 each coordinate isopentenyl diphosphate. Residue cysteine 106 coordinates [4Fe-4S] cluster. (2E)-4-hydroxy-3-methylbut-2-enyl diphosphate is bound at residue histidine 134. Position 134 (histidine 134) interacts with dimethylallyl diphosphate. Histidine 134 provides a ligand contact to isopentenyl diphosphate. Glutamate 136 serves as the catalytic Proton donor. Threonine 175 lines the (2E)-4-hydroxy-3-methylbut-2-enyl diphosphate pocket. Position 205 (cysteine 205) interacts with [4Fe-4S] cluster. Residues serine 233, serine 234, asparagine 235, and serine 278 each coordinate (2E)-4-hydroxy-3-methylbut-2-enyl diphosphate. 4 residues coordinate dimethylallyl diphosphate: serine 233, serine 234, asparagine 235, and serine 278. The isopentenyl diphosphate site is built by serine 233, serine 234, asparagine 235, and serine 278.

It belongs to the IspH family. The cofactor is [4Fe-4S] cluster.

The catalysed reaction is isopentenyl diphosphate + 2 oxidized [2Fe-2S]-[ferredoxin] + H2O = (2E)-4-hydroxy-3-methylbut-2-enyl diphosphate + 2 reduced [2Fe-2S]-[ferredoxin] + 2 H(+). The enzyme catalyses dimethylallyl diphosphate + 2 oxidized [2Fe-2S]-[ferredoxin] + H2O = (2E)-4-hydroxy-3-methylbut-2-enyl diphosphate + 2 reduced [2Fe-2S]-[ferredoxin] + 2 H(+). It functions in the pathway isoprenoid biosynthesis; dimethylallyl diphosphate biosynthesis; dimethylallyl diphosphate from (2E)-4-hydroxy-3-methylbutenyl diphosphate: step 1/1. The protein operates within isoprenoid biosynthesis; isopentenyl diphosphate biosynthesis via DXP pathway; isopentenyl diphosphate from 1-deoxy-D-xylulose 5-phosphate: step 6/6. Its function is as follows. Catalyzes the conversion of 1-hydroxy-2-methyl-2-(E)-butenyl 4-diphosphate (HMBPP) into a mixture of isopentenyl diphosphate (IPP) and dimethylallyl diphosphate (DMAPP). Acts in the terminal step of the DOXP/MEP pathway for isoprenoid precursor biosynthesis. The chain is 4-hydroxy-3-methylbut-2-enyl diphosphate reductase from Chelativorans sp. (strain BNC1).